The following is a 434-amino-acid chain: UDP-N-acetylmuramate--L-alanine ligase (434 aa).

108–114 (GSHGKTT) provides a ligand contact to ATP.

Belongs to the MurCDEF family.

Its subcellular location is the cytoplasm. It carries out the reaction UDP-N-acetyl-alpha-D-muramate + L-alanine + ATP = UDP-N-acetyl-alpha-D-muramoyl-L-alanine + ADP + phosphate + H(+). It functions in the pathway cell wall biogenesis; peptidoglycan biosynthesis. In terms of biological role, cell wall formation. The sequence is that of UDP-N-acetylmuramate--L-alanine ligase from Geobacillus thermodenitrificans (strain NG80-2).